Consider the following 609-residue polypeptide: Glutamine--fructose-6-phosphate aminotransferase [isomerizing] (609 aa).

The Nucleophile; for GATase activity role is filled by C2. The Glutamine amidotransferase type-2 domain occupies 2–217 (CGIVGAIAGR…DGDTAEIRRD (216 aa)). SIS domains are found at residues 285–425 (AESV…LRGA) and 458–599 (WAEC…VDKP). The active-site For Fru-6P isomerization activity is K604.

As to quaternary structure, homodimer.

It is found in the cytoplasm. The enzyme catalyses D-fructose 6-phosphate + L-glutamine = D-glucosamine 6-phosphate + L-glutamate. Its function is as follows. Catalyzes the first step in hexosamine metabolism, converting fructose-6P into glucosamine-6P using glutamine as a nitrogen source. The protein is Glutamine--fructose-6-phosphate aminotransferase [isomerizing] of Xylella fastidiosa (strain Temecula1 / ATCC 700964).